The sequence spans 172 residues: RNA pyrophosphohydrolase (172 aa).

Residues 6–149 form the Nudix hydrolase domain; that stretch reads GYRLNVGIVI…KRDVYRRAMK (144 aa). The short motif at 38–59 is the Nudix box element; sequence GGIDEGETPEQAMYRELYEEVG.

The protein belongs to the Nudix hydrolase family. RppH subfamily. Requires a divalent metal cation as cofactor.

Functionally, accelerates the degradation of transcripts by removing pyrophosphate from the 5'-end of triphosphorylated RNA, leading to a more labile monophosphorylated state that can stimulate subsequent ribonuclease cleavage. The sequence is that of RNA pyrophosphohydrolase from Vibrio atlanticus (strain LGP32) (Vibrio splendidus (strain Mel32)).